A 793-amino-acid chain; its full sequence is Kinesin-associated protein 3 (793 aa).

The residue at position 60 (serine 60) is a Phosphoserine. Positions 103-119 (LPGKEKKEKSSKPKDPP) are enriched in basic and acidic residues. The tract at residues 103-123 (LPGKEKKEKSSKPKDPPPFEG) is disordered. ARM repeat units follow at residues 333 to 373 (FMEN…NLSF), 374 to 412 (DTGLRNKMVQVGLLPKLTALLGNENYKQIAMCVLYHISM), 494 to 533 (DGPTKNLFIDYVGDLAAQISSDEEEEFVIECLGTLANLTI), 578 to 620 (DDSC…QMVF), and 621 to 662 (HQAT…IIAE).

Interacts with SMC3 subunit of the cohesin complex. Heterotrimer of KIFAP3, KIF3A and KIF3B. Interacts with RAP1GDS1/SMG GDS. In terms of processing, phosphorylated on tyrosine residues by SRC in vitro; this reduces the binding affinity of the protein for RAP1GDS1.

In terms of biological role, involved in tethering the chromosomes to the spindle pole and in chromosome movement. Binds to the tail domain of the KIF3A/KIF3B heterodimer to form a heterotrimeric KIF3 complex and may regulate the membrane binding of this complex. This Mus musculus (Mouse) protein is Kinesin-associated protein 3 (Kifap3).